We begin with the raw amino-acid sequence, 482 residues long: UDP-glycosyltransferase 86A2 (482 aa).

UDP-alpha-D-glucose is bound by residues Ser-297, Cys-355 to Gln-357, His-372 to Glu-380, and Leu-394 to Gln-397.

The protein belongs to the UDP-glycosyltransferase family.

The protein is UDP-glycosyltransferase 86A2 (UGT86A2) of Arabidopsis thaliana (Mouse-ear cress).